Reading from the N-terminus, the 790-residue chain is N-methylputrescine oxidase 1, peroxisomal (790 aa).

Residues 1–23 (MATTKQKVTAPSPSPSSSTASCC) form a disordered region. Residues 9-23 (TAPSPSPSSSTASCC) are compositionally biased toward low complexity. 423–434 (AFDAGEDGLGKN) contacts substrate. Aspartate 425 serves as the catalytic Proton acceptor. A disulfide bridge connects residues cysteine 444 and cysteine 470. A substrate-binding site is contributed by 506–511 (VANYEY). Tyrosine 509 acts as the Schiff-base intermediate with substrate; via topaquinone in catalysis. A 2',4',5'-topaquinone modification is found at tyrosine 509. Cu cation is bound by residues histidine 559 and histidine 561. Residues aspartate 714 and isoleucine 715 each coordinate Mn(2+). Histidine 725 contributes to the Cu cation binding site.

The protein belongs to the copper/topaquinone oxidase family. In terms of assembly, homodimer. Requires Cu cation as cofactor. Zn(2+) serves as cofactor. The cofactor is L-topaquinone. In terms of processing, topaquinone (TPQ) is generated by copper-dependent autoxidation of a specific tyrosyl residue. In terms of tissue distribution, mainly expressed in roots, and, to a lower extent, in stems.

Its subcellular location is the peroxisome. The catalysed reaction is a primary methyl amine + O2 + H2O = an aldehyde + H2O2 + NH4(+). It carries out the reaction N-methylputrescine + O2 + H2O = 4-methylaminobutanal + H2O2 + NH4(+). Its pathway is alkaloid biosynthesis; nicotine biosynthesis. Its function is as follows. Involved in the biosynthesis of pyridine alkaloid natural products, leading mainly to the production of anabasine, anatabine, nicotine and nornicotine, effective deterrents against herbivores with antiparasitic and pesticide properties (neurotoxins); nornicotine serves as the precursor in the synthesis of the carcinogen compound N'-nitrosonornicotine (NNN). Amine oxidase which mediates the deamination of N-methylputrescine to produce 4-methylaminobutanal. Oxidizes preferentially N-methylated amines. The protein is N-methylputrescine oxidase 1, peroxisomal of Nicotiana tabacum (Common tobacco).